The sequence spans 454 residues: Bifunctional protein GlmU (454 aa).

Residues methionine 1–lysine 240 are pyrophosphorylase. UDP-N-acetyl-alpha-D-glucosamine-binding positions include leucine 8–glycine 11, lysine 22, and glycine 87–threonine 88. Residue aspartate 119 participates in Mg(2+) binding. Glycine 152, glutamate 166, asparagine 181, and asparagine 238 together coordinate UDP-N-acetyl-alpha-D-glucosamine. Asparagine 238 provides a ligand contact to Mg(2+). Positions isoleucine 241 to glutamine 261 are linker. The segment at glycine 262–glutamine 454 is N-acetyltransferase. UDP-N-acetyl-alpha-D-glucosamine is bound by residues arginine 325 and lysine 342. Histidine 353 functions as the Proton acceptor in the catalytic mechanism. UDP-N-acetyl-alpha-D-glucosamine-binding residues include tyrosine 356 and asparagine 367. Acetyl-CoA is bound by residues alanine 370, asparagine 376–tyrosine 377, serine 395, alanine 413, and arginine 430.

In the N-terminal section; belongs to the N-acetylglucosamine-1-phosphate uridyltransferase family. It in the C-terminal section; belongs to the transferase hexapeptide repeat family. Homotrimer. It depends on Mg(2+) as a cofactor.

The protein localises to the cytoplasm. The enzyme catalyses alpha-D-glucosamine 1-phosphate + acetyl-CoA = N-acetyl-alpha-D-glucosamine 1-phosphate + CoA + H(+). The catalysed reaction is N-acetyl-alpha-D-glucosamine 1-phosphate + UTP + H(+) = UDP-N-acetyl-alpha-D-glucosamine + diphosphate. Its pathway is nucleotide-sugar biosynthesis; UDP-N-acetyl-alpha-D-glucosamine biosynthesis; N-acetyl-alpha-D-glucosamine 1-phosphate from alpha-D-glucosamine 6-phosphate (route II): step 2/2. It participates in nucleotide-sugar biosynthesis; UDP-N-acetyl-alpha-D-glucosamine biosynthesis; UDP-N-acetyl-alpha-D-glucosamine from N-acetyl-alpha-D-glucosamine 1-phosphate: step 1/1. It functions in the pathway bacterial outer membrane biogenesis; LPS lipid A biosynthesis. Its function is as follows. Catalyzes the last two sequential reactions in the de novo biosynthetic pathway for UDP-N-acetylglucosamine (UDP-GlcNAc). The C-terminal domain catalyzes the transfer of acetyl group from acetyl coenzyme A to glucosamine-1-phosphate (GlcN-1-P) to produce N-acetylglucosamine-1-phosphate (GlcNAc-1-P), which is converted into UDP-GlcNAc by the transfer of uridine 5-monophosphate (from uridine 5-triphosphate), a reaction catalyzed by the N-terminal domain. This chain is Bifunctional protein GlmU, found in Helicobacter hepaticus (strain ATCC 51449 / 3B1).